Here is a 748-residue protein sequence, read N- to C-terminus: MEENNDSTENPQQGQGRQNAIKCGWLRKQGGFVKTWHTRWFVLKGDQLYYFKDEDETKPLGTIFLPGNKVSEHPCNEENPGKFLFEVVPGGDRDRMTANHESYLLMASTQNDMEDWVKSIRRVIWGPFGGGIFGQKLEDTVRYEKRYGNRLAPMLVEQCVDFIRQRGLKEEGLFRLPGQANLVKELQDAFDCGEKPSFDSNTDVHTVASLLKLYLRELPEPVIPYAKYEDFLSCAKLLSKEEEAGVKELAKQVKSLPVVNYNLLKYICRFLDEVQSYSGVNKMSVQNLATVFGPNILRPKVEDPLTIMEGTVVVQQLMSVMISKHDCLFPKDAELQSKPQDGVSNNNEIQKKATMGQLQNKENNNTKDSPSRQCSWDKSESPQRSSMNNGSPTALSGSKTNSPKNSVHKLDVSRSPPLMVKKNPAFNKGSGIVTNGSFSSSNAEGLEKTQTTPNGSLQARRSSSLKVSGTKMGTHSVQNGTVRMGILNSDTLGNPTNVRNMSWLPNGYVTLRDNKQKEQAGELGQHNRLSTYDNVHQQFSMMNLDDKQSIDSATWSTSSCEISLPENSNSCRSSTTTCPEQDFFGGNFEDPVLDGPPQDDLSHPRDYESKSDHRSVGGRSSRATSSSDNSETFVGNSSSNHSALHSLVSSLKQEMTKQKIEYESRIKSLEQRNLTLETEMMSLHDELDQERKKFTMIEIKMRNAERAKEDAEKRNDMLQKEMEQFFSTFGELTVEPRRTERGNTIWIQ.

Residues 1–20 form a disordered region; the sequence is MEENNDSTENPQQGQGRQNA. Polar residues predominate over residues 7 to 18; it reads STENPQQGQGRQ. A PH domain is found at 19–125; the sequence is NAIKCGWLRK…WVKSIRRVIW (107 aa). A Rho-GAP domain is found at 135–329; sequence QKLEDTVRYE…VMISKHDCLF (195 aa). Disordered stretches follow at residues 354–476 and 582–641; these read TMGQ…GTHS and DFFG…SSNH. 2 stretches are compositionally biased toward polar residues: residues 356 to 374 and 382 to 405; these read GQLQ…SRQC and PQRS…SPKN. Phosphoserine is present on residues Ser369, Ser391, Ser396, Ser398, Ser402, Ser413, Ser415, and Ser437. Residues 432–476 show a composition bias toward polar residues; sequence IVTNGSFSSSNAEGLEKTQTTPNGSLQARRSSSLKVSGTKMGTHS. Thr452 is subject to Phosphothreonine. The span at 600–615 shows a compositional bias: basic and acidic residues; sequence DLSHPRDYESKSDHRS. Over residues 617–641 the composition is skewed to low complexity; that stretch reads GGRSSRATSSSDNSETFVGNSSSNH. The stretch at 649–729 forms a coiled coil; that stretch reads SSLKQEMTKQ…KEMEQFFSTF (81 aa).

As to quaternary structure, interacts with FLNA. In terms of processing, phosphorylated by ROCK, leading to activate the RacGAP activity. Isoform 1 is widely expressed with a higher level in kidney. Isoform 2 is mainly expressed in endothelial cells.

It is found in the cytoplasm. Its subcellular location is the cytoskeleton. The protein localises to the cell junction. The protein resides in the adherens junction. It localises to the focal adhesion. It is found in the cell projection. Rho GTPase-activating protein involved in cell polarity, cell morphology and cytoskeletal organization. Acts as a GTPase activator for the Rac-type GTPase by converting it to an inactive GDP-bound state. Controls actin remodeling by inactivating Rac downstream of Rho leading to suppress leading edge protrusion and promotes cell retraction to achieve cellular polarity. Able to suppress RAC1 and CDC42 activity in vitro. Overexpression induces cell rounding with partial or complete disruption of actin stress fibers and formation of membrane ruffles, lamellipodia, and filopodia. Isoform 2 is a vascular cell-specific GAP involved in modulation of angiogenesis. This Homo sapiens (Human) protein is Rho GTPase-activating protein 24 (ARHGAP24).